A 462-amino-acid chain; its full sequence is DEK domain-containing chromatin-associated protein 1 (462 aa).

2 disordered regions span residues 18–91 (AVTE…TQGR) and 212–390 (KETK…RKEL). The segment covering 20 to 32 (TEKDTETKKKDEV) has biased composition (basic and acidic residues). A compositionally biased stretch (acidic residues) spans 33-46 (EKDEAMEEKGEEID). The segment covering 77–91 (PRSSGNKPLSITQGR) has biased composition (polar residues). Residues 267 to 276 (NGEDDVAPEE) show a composition bias toward acidic residues. Basic and acidic residues-rich tracts occupy residues 277-303 (ENNKSEDTETEDEKDKAKEKTKSTDKK), 312-322 (EKPAAEEEKSI), and 347-360 (QKVDKDDSSKEKGK). Positions 344–351 (SKKQKVDK) match the Nuclear localization signal motif. Residues 384–439 (EPTRKELHVVVTKILKEVDFNTATLSDILRKLGSHFGIDLMHRKAEVKDIITDAIN) enclose the DEK-C domain. 2 consecutive DNA-binding regions follow at residues 402–416 (DFNTATLSDILRKLG) and 431–435 (KDIIT). The tract at residues 438–462 (INEMSDDDDEKEEDTEDEGEKEGKD) is disordered. Positions 441-462 (MSDDDDEKEEDTEDEGEKEGKD) are enriched in acidic residues.

Found in a mRNA splicing-dependent exon junction complex (EJC). Binds specifically histones H3 and H4.

The protein resides in the nucleus. It localises to the nucleolus. Functionally, chromatin-associated protein which contributes to the modulation of chromatin structure (such as super-helical structure of DNA) and function. Binds to chromatin of protein-coding genes throughout the genome to regulate nucleosome occupancy and chromatin accessibility, and to modulate the expression of target genes. In Arabidopsis thaliana (Mouse-ear cress), this protein is DEK domain-containing chromatin-associated protein 1.